A 279-amino-acid polypeptide reads, in one-letter code: NH(3)-dependent NAD(+) synthetase (279 aa).

46–53 is a binding site for ATP; it reads GVSGGQDS. Asp-52 is a binding site for Mg(2+). Residue Arg-139 coordinates deamido-NAD(+). ATP is bound at residue Thr-159. Glu-164 lines the Mg(2+) pocket. Deamido-NAD(+) is bound by residues Lys-172 and Asp-179. The ATP site is built by Lys-188 and Thr-210. 259-260 contacts deamido-NAD(+); sequence HK.

The protein belongs to the NAD synthetase family. In terms of assembly, homodimer.

The catalysed reaction is deamido-NAD(+) + NH4(+) + ATP = AMP + diphosphate + NAD(+) + H(+). It functions in the pathway cofactor biosynthesis; NAD(+) biosynthesis; NAD(+) from deamido-NAD(+) (ammonia route): step 1/1. Functionally, catalyzes the ATP-dependent amidation of deamido-NAD to form NAD. Uses ammonia as a nitrogen source. The protein is NH(3)-dependent NAD(+) synthetase of Leifsonia xyli subsp. xyli (strain CTCB07).